Consider the following 359-residue polypeptide: Serine hydrolase-like protein DDB_G0286239 (359 aa).

An AB hydrolase-1 domain is found at 38–289 (LALHGWLDNA…VPGSHHFHME (252 aa)). Ser111 is an active-site residue. The tract at residues 310 to 359 (FTPSSTTQQQQQQQQSAENKKGDNHNQIAEQDLSTSNTSSPIISKPKPNL) is disordered. The segment covering 334 to 351 (HNQIAEQDLSTSNTSSPI) has biased composition (polar residues).

This sequence belongs to the AB hydrolase superfamily.

In terms of biological role, probable serine hydrolase. The sequence is that of Serine hydrolase-like protein DDB_G0286239 from Dictyostelium discoideum (Social amoeba).